Consider the following 298-residue polypeptide: Ribosomal RNA small subunit methyltransferase A (298 aa).

6 residues coordinate S-adenosyl-L-methionine: asparagine 35, leucine 37, glycine 62, glutamate 83, aspartate 108, and asparagine 133.

Belongs to the class I-like SAM-binding methyltransferase superfamily. rRNA adenine N(6)-methyltransferase family. RsmA subfamily.

It localises to the cytoplasm. The enzyme catalyses adenosine(1518)/adenosine(1519) in 16S rRNA + 4 S-adenosyl-L-methionine = N(6)-dimethyladenosine(1518)/N(6)-dimethyladenosine(1519) in 16S rRNA + 4 S-adenosyl-L-homocysteine + 4 H(+). Functionally, specifically dimethylates two adjacent adenosines (A1518 and A1519) in the loop of a conserved hairpin near the 3'-end of 16S rRNA in the 30S particle. May play a critical role in biogenesis of 30S subunits. This Streptococcus pyogenes serotype M12 (strain MGAS9429) protein is Ribosomal RNA small subunit methyltransferase A.